Reading from the N-terminus, the 418-residue chain is NADH-quinone oxidoreductase subunit D (418 aa).

Belongs to the complex I 49 kDa subunit family. As to quaternary structure, NDH-1 is composed of 14 different subunits. Subunits NuoB, C, D, E, F, and G constitute the peripheral sector of the complex.

Its subcellular location is the cell inner membrane. The enzyme catalyses a quinone + NADH + 5 H(+)(in) = a quinol + NAD(+) + 4 H(+)(out). NDH-1 shuttles electrons from NADH, via FMN and iron-sulfur (Fe-S) centers, to quinones in the respiratory chain. The immediate electron acceptor for the enzyme in this species is believed to be ubiquinone. Couples the redox reaction to proton translocation (for every two electrons transferred, four hydrogen ions are translocated across the cytoplasmic membrane), and thus conserves the redox energy in a proton gradient. The protein is NADH-quinone oxidoreductase subunit D of Bordetella avium (strain 197N).